Consider the following 159-residue polypeptide: 17.9 kDa class II heat shock protein (159 aa).

A sHSP domain is found at 43–157 (DAKAMAATPA…PKKPRTIQVK (115 aa)).

Belongs to the small heat shock protein (HSP20) family.

The protein resides in the cytoplasm. The sequence is that of 17.9 kDa class II heat shock protein (HSP17.9-D) from Glycine max (Soybean).